The sequence spans 391 residues: S-adenosylmethionine synthase (391 aa).

Histidine 14 lines the ATP pocket. Aspartate 16 contributes to the Mg(2+) binding site. Glutamate 42 is a binding site for K(+). L-methionine contacts are provided by glutamate 55 and glutamine 98. The flexible loop stretch occupies residues 98–108 (QSVDIAMGVDE). ATP is bound by residues 172–174 (DGK), 238–239 (RF), aspartate 247, 253–254 (RK), alanine 270, and lysine 274. Aspartate 247 contributes to the L-methionine binding site. Residue lysine 278 coordinates L-methionine.

Belongs to the AdoMet synthase family. As to quaternary structure, homotetramer; dimer of dimers. The cofactor is Mg(2+). It depends on K(+) as a cofactor.

Its subcellular location is the cytoplasm. It carries out the reaction L-methionine + ATP + H2O = S-adenosyl-L-methionine + phosphate + diphosphate. It functions in the pathway amino-acid biosynthesis; S-adenosyl-L-methionine biosynthesis; S-adenosyl-L-methionine from L-methionine: step 1/1. In terms of biological role, catalyzes the formation of S-adenosylmethionine (AdoMet) from methionine and ATP. The overall synthetic reaction is composed of two sequential steps, AdoMet formation and the subsequent tripolyphosphate hydrolysis which occurs prior to release of AdoMet from the enzyme. This is S-adenosylmethionine synthase from Clostridium botulinum (strain Kyoto / Type A2).